The chain runs to 172 residues: MIIYRDLISHDEMFSDIYKIREVADGLCLEVEGKMVSRTEGNIDDSLIGGNASAEGPEGEGTESTVITGVDIVMNHHLQETSFTKEAYKKYIKDYMKSIKGKLEEQRPERVKPFMTGAAEQIKHILANFKNYQFFIGENMNPDGMVALLDYREDGVTPYMIFFKDGLEMEKC.

A TCTP domain is found at 1 to 172; the sequence is MIIYRDLISH…FKDGLEMEKC (172 aa). At Ser-46 the chain carries Phosphoserine; by PLK1. Ser-53 is subject to Phosphoserine. At Ser-64 the chain carries Phosphoserine; by PLK1. The interval 70-172 is required for reduction of TSC22D1 protein stability; it reads VDIVMNHHLQ…FKDGLEMEKC (103 aa).

This sequence belongs to the TCTP family. As to quaternary structure, homodimer. Interacts with STEAP3. Interacts with TSC22D1; interaction results in the destabilization of TSC22D1 protein.

The protein localises to the cytoplasm. Functionally, involved in calcium binding and microtubule stabilization. Acts as a negative regulator of TSC22D1-mediated apoptosis, via interaction with and destabilization of TSC22D1 protein. In Bos taurus (Bovine), this protein is Translationally-controlled tumor protein (TPT1).